A 780-amino-acid polypeptide reads, in one-letter code: Pendrin (780 aa).

Residues methionine 1–aspartate 87 lie on the Cytoplasmic side of the membrane. A helical membrane pass occupies residues isoleucine 88 to leucine 108. Residue alanine 109 is a topological domain, extracellular. The helical transmembrane segment at alanine 110 to phenylalanine 130 threads the bilayer. The Cytoplasmic portion of the chain corresponds to glycine 131–histidine 135. Residues isoleucine 136–alanine 156 traverse the membrane as a helical segment. At proline 157–threonine 191 the chain is on the extracellular side. The helical transmembrane segment at leucine 192–valine 212 threads the bilayer. At arginine 213–proline 218 the chain is on the cytoplasmic side. The chain crosses the membrane as a helical span at residues leucine 219–valine 239. The Extracellular segment spans residues leucine 240 to asparagine 263. The helical transmembrane segment at isoleucine 264 to alanine 284 threads the bilayer. Over valine 285–lysine 295 the chain is Cytoplasmic. The chain crosses the membrane as a helical span at residues isoleucine 296–glycine 316. The Extracellular segment spans residues alanine 317–glycine 344. Residues leucine 345–valine 365 form a helical membrane-spanning segment. The Cytoplasmic segment spans residues serine 366–glutamate 384. The helical transmembrane segment at phenylalanine 385–threonine 405 threads the bilayer. Residues alanine 406–glutamine 421 are Extracellular-facing. The helical transmembrane segment at valine 422–leucine 442 threads the bilayer. Topologically, residues glutamate 443–serine 448 are cytoplasmic. The helical transmembrane segment at valine 449–proline 469 threads the bilayer. Residues arginine 470 to cysteine 486 lie on the Extracellular side of the membrane. Residues isoleucine 487–leucine 507 form a helical membrane-spanning segment. Residues threonine 508–serine 780 lie on the Cytoplasmic side of the membrane. Positions histidine 535–leucine 729 constitute an STAS domain.

Belongs to the SLC26A/SulP transporter (TC 2.A.53) family. As to expression, highly expressed in the kidney (at protein level).

The protein resides in the cell membrane. The protein localises to the apical cell membrane. The enzyme catalyses chloride(in) = chloride(out). It carries out the reaction iodide(out) = iodide(in). It catalyses the reaction hydrogencarbonate(in) + chloride(out) = hydrogencarbonate(out) + chloride(in). The catalysed reaction is iodide(in) + hydrogencarbonate(out) = iodide(out) + hydrogencarbonate(in). The enzyme catalyses iodide(in) + chloride(out) = iodide(out) + chloride(in). It carries out the reaction formate(in) + chloride(out) = formate(out) + chloride(in). Functionally, sodium-independent transporter of chloride and iodide. Mediates electroneutral chloride-bicarbonate and chloride-formate exchange with 1:1 stoichiometry. Mediates electroneutral iodide-chloride and iodide-bicarbonate exchange. In Rattus norvegicus (Rat), this protein is Pendrin (Slc26a4).